Consider the following 251-residue polypeptide: NADH-quinone oxidoreductase subunit B (251 aa).

The [4Fe-4S] cluster site is built by cysteine 38, cysteine 39, cysteine 104, and cysteine 134. Positions 208 to 251 (RKGLPPGSMTDVGWIPPEARERLKAGRGAGASGSGEREEGKEGA) are disordered. The span at 242–251 (GEREEGKEGA) shows a compositional bias: basic and acidic residues.

This sequence belongs to the complex I 20 kDa subunit family. As to quaternary structure, NDH-1 is composed of 14 different subunits. Subunits NuoB, C, D, E, F, and G constitute the peripheral sector of the complex. The cofactor is [4Fe-4S] cluster.

The protein localises to the cell membrane. It carries out the reaction a quinone + NADH + 5 H(+)(in) = a quinol + NAD(+) + 4 H(+)(out). NDH-1 shuttles electrons from NADH, via FMN and iron-sulfur (Fe-S) centers, to quinones in the respiratory chain. The immediate electron acceptor for the enzyme in this species is believed to be a menaquinone. Couples the redox reaction to proton translocation (for every two electrons transferred, four hydrogen ions are translocated across the cytoplasmic membrane), and thus conserves the redox energy in a proton gradient. The polypeptide is NADH-quinone oxidoreductase subunit B (Rubrobacter xylanophilus (strain DSM 9941 / JCM 11954 / NBRC 16129 / PRD-1)).